The following is a 402-amino-acid chain: Queuine tRNA-ribosyltransferase-like protein (402 aa).

It belongs to the queuine tRNA-ribosyltransferase family.

The polypeptide is Queuine tRNA-ribosyltransferase-like protein (Theileria annulata).